Reading from the N-terminus, the 303-residue chain is MNPQELKSILSEGLLSFPLTDFDVAGDFRADTYAKRLEWLAPYGASALFAAGGTGEFFSLQASEYSEIIKVAVDTCRGEVPILAGTGGPTRQAIAYAQEAERLGAAGVLLLPHYLTEASQEGLVSHVEQVCKSVDFGVVVYNRNVCRLNADSLEKLADRCPNLIGFKDGVGDIESMVSIRRRLGERLTYLGGLPTAEVYAAAYKAMGVPVYSSAVFNFIPKTAMDFYRAVASEDHETVGKLIDDFFLPYLDIRNRCEGYGVSIVKAGARLVGHDAGPVRAPLTDLLPNEMEQLDALIKKLGAQ.

It belongs to the DapA family.

The enzyme catalyses 5-dehydro-4-deoxy-D-glucarate + H(+) = 2,5-dioxopentanoate + CO2 + H2O. Its pathway is carbohydrate acid metabolism; D-glucarate degradation; 2,5-dioxopentanoate from D-glucarate: step 2/2. The chain is 5-dehydro-4-deoxyglucarate dehydratase from Pseudomonas putida (Arthrobacter siderocapsulatus).